The primary structure comprises 310 residues: ADP-L-glycero-D-manno-heptose-6-epimerase (310 aa).

NADP(+) is bound by residues 10–11 (FI), 31–32 (DN), lysine 38, lysine 53, 75–79 (EGACS), and asparagine 92. The active-site Proton acceptor is the tyrosine 140. NADP(+) is bound at residue lysine 144. Residue asparagine 169 coordinates substrate. Positions 170 and 178 each coordinate NADP(+). Catalysis depends on lysine 178, which acts as the Proton acceptor. Substrate is bound by residues serine 180, histidine 187, 201 to 204 (FEGS), arginine 209, and tyrosine 272.

The protein belongs to the NAD(P)-dependent epimerase/dehydratase family. HldD subfamily. Homopentamer. It depends on NADP(+) as a cofactor.

The enzyme catalyses ADP-D-glycero-beta-D-manno-heptose = ADP-L-glycero-beta-D-manno-heptose. It functions in the pathway nucleotide-sugar biosynthesis; ADP-L-glycero-beta-D-manno-heptose biosynthesis; ADP-L-glycero-beta-D-manno-heptose from D-glycero-beta-D-manno-heptose 7-phosphate: step 4/4. In terms of biological role, catalyzes the interconversion between ADP-D-glycero-beta-D-manno-heptose and ADP-L-glycero-beta-D-manno-heptose via an epimerization at carbon 6 of the heptose. The sequence is that of ADP-L-glycero-D-manno-heptose-6-epimerase from Salmonella arizonae (strain ATCC BAA-731 / CDC346-86 / RSK2980).